Consider the following 532-residue polypeptide: Calnexin homolog 2 (532 aa).

The signal sequence occupies residues 1 to 25; it reads MRERIITFVSLLLVALLSFPSVSYC. Residues 26–468 are Lumenal-facing; the sequence is DDQTILYESF…EKAETQPNLT (443 aa). 2 residues coordinate Ca(2+): serine 34 and aspartate 65. Cysteine 110 and cysteine 145 are oxidised to a cystine. Tyrosine 114, lysine 116, tyrosine 136, and aspartate 143 together coordinate an alpha-D-glucoside. Residues 208-302 are disordered; the sequence is NLLSAEDFEP…DEEDGEWEAP (95 aa). Positions 225 to 358 are p domain (Extended arm); it reads IPDPEDKKPE…RDIPNPDYFE (134 aa). Residues 226-242 are compositionally biased toward basic and acidic residues; the sequence is PDPEDKKPEDWDERAKI. Tandem repeats lie at residues 227–238, 244–255, 263–274, 282–293, and 297–307. 4 X approximate repeats regions lie at residues 227–293 and 297–354; these read DPED…DWDD and GEWE…IPNP. 2 stretches are compositionally biased toward acidic residues: residues 252–283 and 290–299; these read DWDEDAPMEIEDEEAEKPEGWLDDEPVEVEDP and DWDDEEDGEW. Cysteine 309 and cysteine 315 are disulfide-bonded. A run of 3 repeats spans residues 316 to 326, 330 to 340, and 344 to 354. An alpha-D-glucoside is bound at residue glutamate 373. Residue aspartate 384 participates in Ca(2+) binding. The N-linked (GlcNAc...) asparagine glycan is linked to asparagine 466. The helical transmembrane segment at 469–489 threads the bilayer; it reads IGVLISIVIVFLSLFFKLIFG. At 490–532 the chain is on the cytoplasmic side; that stretch reads GAKAKVEKKKPETAAETSTSEAKTEEKAEAVAAPRKRQTRRES. Residues 493 to 532 form a disordered region; the sequence is AKVEKKKPETAAETSTSEAKTEEKAEAVAAPRKRQTRRES. Positions 523–532 are enriched in basic residues; sequence PRKRQTRRES.

Belongs to the calreticulin family.

Its subcellular location is the endoplasmic reticulum membrane. In terms of biological role, calcium-binding protein that interacts with newly synthesized monoglucosylated glycoproteins in the endoplasmic reticulum. It may act in assisting protein assembly and/or in the retention within the ER of unassembled protein subunits. It seems to play a major role in the quality control apparatus of the ER by the retention of incorrectly folded proteins. The chain is Calnexin homolog 2 from Arabidopsis thaliana (Mouse-ear cress).